The sequence spans 132 residues: MSLQLRSSARIPSGSISPFMRMAPLAFLLLFTLPQHLAEAAPSSVIAATELRCVCLTVTPKINPKLIANLEVIPAGPQCPTVEVIAKLKNQKEVCLDPEAPVIKKIIQKILGSDKKKAKRNALAVERTASVQ.

A signal peptide spans 1-40; the sequence is MSLQLRSSARIPSGSISPFMRMAPLAFLLLFTLPQHLAEA. 2 cysteine pairs are disulfide-bonded: Cys53/Cys79 and Cys55/Cys95.

It belongs to the intercrine alpha (chemokine CxC) family. Monomer. Homodimer. In terms of processing, GCP-2(1-78) and GCP-2(9-78) are produced by proteolytic cleavage after secretion from fibroblasts and epithelial cells. GCP-2(9-78) is the most prominent form. A number of additional N-terminal (processed between pos. 41 and 48) and C-terminal (processed between pos. 118 and 132) processed forms have been identified, probably also representing intermediate states.

The protein resides in the secreted. In terms of biological role, may participate in the recruitment of inflammatory cells by injured or infected tissue. GCP-2(1-78) and, more potent, GCP-2(9-78) attract neutrophils and are involved in neutrophil activation. This chain is C-X-C motif chemokine 5 (Cxcl5), found in Mus musculus (Mouse).